The chain runs to 88 residues: Putative membrane protein insertion efficiency factor (88 aa).

Residues Val68–Leu88 are disordered. A compositionally biased stretch (basic and acidic residues) spans Thr75–Leu88.

The protein belongs to the UPF0161 family.

The protein resides in the cell inner membrane. Functionally, could be involved in insertion of integral membrane proteins into the membrane. This Burkholderia ambifaria (strain MC40-6) protein is Putative membrane protein insertion efficiency factor.